Consider the following 178-residue polypeptide: Beta-lactoglobulin-1A/1C (178 aa).

The first 18 residues, 1–18, serve as a signal peptide directing secretion; it reads MRCLLLTLGLALLCGVQA. 2 cysteine pairs are disulfide-bonded: Cys84-Cys176 and Cys124-Cys137.

Belongs to the calycin superfamily. Lipocalin family. Under physiological conditions beta-lactoglobulin exists as an equilibrium mixture of monomeric and dimeric forms.

It localises to the secreted. Lactoglobulin is the primary component of whey, it binds retinol and is probably involved in the transport of that molecule. In Sus scrofa (Pig), this protein is Beta-lactoglobulin-1A/1C.